The chain runs to 484 residues: UDP-N-acetylmuramate--L-alanine ligase (484 aa).

ATP is bound at residue 123–129 (GTHGKTT).

The protein belongs to the MurCDEF family.

It localises to the cytoplasm. It catalyses the reaction UDP-N-acetyl-alpha-D-muramate + L-alanine + ATP = UDP-N-acetyl-alpha-D-muramoyl-L-alanine + ADP + phosphate + H(+). Its pathway is cell wall biogenesis; peptidoglycan biosynthesis. Its function is as follows. Cell wall formation. The protein is UDP-N-acetylmuramate--L-alanine ligase of Pseudomonas fluorescens (strain ATCC BAA-477 / NRRL B-23932 / Pf-5).